Reading from the N-terminus, the 122-residue chain is Basic phospholipase A2 Ts-G6D49 (122 aa).

Intrachain disulfides connect Cys-26–Cys-115, Cys-28–Cys-44, Cys-43–Cys-95, Cys-49–Cys-122, Cys-50–Cys-88, Cys-57–Cys-81, and Cys-75–Cys-86. Ca(2+)-binding residues include Tyr-27, Gly-29, and Gly-31. His-47 is an active-site residue. Asp-48 contacts Ca(2+). Asp-89 is a catalytic residue.

Requires Ca(2+) as cofactor. As to expression, expressed by the venom gland.

It is found in the secreted. It catalyses the reaction a 1,2-diacyl-sn-glycero-3-phosphocholine + H2O = a 1-acyl-sn-glycero-3-phosphocholine + a fatty acid + H(+). Its function is as follows. Snake venom phospholipase A2 that induces fast and sustaining local edema a few hours after injection (5-10 ug) in the hind paw, and prolongs the coagulation time of human plasma. Exhibits moderate hydrolytic activities and prefers the zwitterionic micelles (dPPC with Triton X-100) to the anionic micelles (dPPC with deoxycholate). PLA2 catalyzes the calcium-dependent hydrolysis of the 2-acyl groups in 3-sn-phosphoglycerides. This chain is Basic phospholipase A2 Ts-G6D49, found in Trimeresurus stejnegeri (Chinese green tree viper).